Here is a 359-residue protein sequence, read N- to C-terminus: 4-galactosyl-N-acetylglucosaminide 3-alpha-L-fucosyltransferase FUT6 (359 aa).

Residues Met-1–Arg-14 are Cytoplasmic-facing. The chain crosses the membrane as a helical; Signal-anchor for type II membrane protein span at residues Cys-15 to Leu-34. The Lumenal portion of the chain corresponds to Arg-35–Thr-359. Residues Asn-46, Asn-91, Asn-153, and Asn-184 are each glycosylated (N-linked (GlcNAc...) asparagine). A determines site-specific fucosylation region spans residues Lys-73–Val-112.

The protein belongs to the glycosyltransferase 10 family. As to quaternary structure, homodimer and monomer. Monomer (secreted form). N-glycosylated. In terms of processing, proteolytic cleavage releases a secreted glycoform of 43 kDa. In terms of tissue distribution, kidney, liver, colon, small intestine, bladder, uterus and salivary gland.

It is found in the golgi apparatus. The protein localises to the golgi stack membrane. It localises to the secreted. The catalysed reaction is a beta-D-galactosyl-(1-&gt;4)-N-acetyl-beta-D-glucosaminyl derivative + GDP-beta-L-fucose = a beta-D-galactosyl-(1-&gt;4)-[alpha-L-fucosyl-(1-&gt;3)]-N-acetyl-beta-D-glucosaminyl derivative + GDP + H(+). It carries out the reaction an N-acetyl-alpha-neuraminyl-(2-&gt;3)-beta-D-galactosyl-(1-&gt;4)-N-acetyl-beta-D-glucosaminyl derivative + GDP-beta-L-fucose = an alpha-Neu5Ac-(2-&gt;3)-beta-D-Gal-(1-&gt;4)-[alpha-L-Fuc-(1-&gt;3)]-beta-D-GlcNAc derivative + GDP + H(+). The enzyme catalyses an alpha-Neu5Ac-(2-&gt;3)-beta-D-Gal-(1-&gt;4)-beta-D-GlcNAc-(1-&gt;3)-beta-D-Gal-(1-&gt;4)-[alpha-L-Fuc-(1-&gt;3)]-beta-D-GlcNAc derivative + GDP-beta-L-fucose = an alpha-Neu5Ac-(2-&gt;3)-beta-D-Gal-(1-&gt;4)-[alpha-L-Fuc-(1-&gt;3)]-beta-D-GlcNAc-(1-&gt;3)-beta-D-Gal-(1-&gt;4)-[alpha-L-Fuc-(1-&gt;3)]-beta-D-GlcNAc derivative + GDP + H(+). It catalyses the reaction a neolactoside nLc6Cer + GDP-beta-L-fucose = beta-D-Gal-(1-&gt;4)-[alpha-L-Fuc-(1-&gt;3)]-beta-D-GlcNAc-(1-&gt;3)-beta-D-Gal-(1-&gt;4)-beta-D-GlcNAc-(1-&gt;3)-beta-D-Gal-(1-&gt;4)-beta-D-Glc-(1&lt;-&gt;1')-Cer + GDP + H(+). The catalysed reaction is a neolactoside nLc6Cer + GDP-beta-L-fucose = beta-D-galactosyl-(1-&gt;4)-N-acetyl-beta-D-glucosaminyl-(1-&gt;3)-beta-D-galactosyl-(1-&gt;4)-[alpha-L-fucosyl-(1-&gt;3)]-N-acetyl-beta-D-glucosaminyl-(1-&gt;3)-beta-D-galactosyl-(1-&gt;4)-beta-D-glucosyl-(1&lt;-&gt;1')-ceramide + GDP + H(+). It carries out the reaction a neolactoside VI(3)-alpha-NeuNAc-nLc6Cer + GDP-beta-L-fucose = a neolactoside VI(3)-alpha-NeuAc,V(3)-alphaFuc-nLc6Cer + GDP + H(+). The enzyme catalyses beta-D-galactosyl-(1-&gt;4)-N-acetyl-D-glucosamine + GDP-beta-L-fucose = beta-D-galactosyl-(1-&gt;4)-[alpha-L-fucosyl-(1-&gt;3)]-N-acetyl-D-glucosamine + GDP + H(+). It catalyses the reaction N-acetyl-alpha-neuraminosyl-(2-&gt;3)-beta-D-galactosyl-(1-&gt;4)-N-acetyl-beta-D-glucosamine + GDP-beta-L-fucose = N-acetyl-alpha-neuraminosyl-(2-&gt;3)-beta-D-galactosyl-(1-&gt;4)-[alpha-L-fucosyl-(1-&gt;3)]-N-acetyl-beta-D-glucosamine + GDP + H(+). The catalysed reaction is lactose + GDP-beta-L-fucose = beta-D-galactosyl-(1-&gt;4)-[alpha-L-fucosyl-(1-&gt;3)]-D-glucose + GDP + H(+). It carries out the reaction alpha-L-Fuc-(1-&gt;2)-beta-D-Gal-(1-&gt;4)-D-Glc + GDP-beta-L-fucose = alpha-L-Fuc-(1-&gt;2)-beta-D-Gal-(1-&gt;4)-[alpha-L-Fuc-(1-&gt;3)]-D-Glc + GDP + H(+). The enzyme catalyses a beta-D-galactosyl-(1-&gt;4)-N-acetyl-beta-D-6-sulfooxy-glucosaminyl derivative + GDP-beta-L-fucose = a beta-D-galactosyl-(1-&gt;4)-[alpha-L-fucosyl-(1-&gt;3)]-N-acetyl-beta-D-6-sulfooxy-glucosaminyl derivative + GDP + H(+). It participates in protein modification; protein glycosylation. Functionally, catalyzes the transfer of L-fucose, from a guanosine diphosphate-beta-L-fucose, to the N-acetyl glucosamine (GlcNAc) of a distal alpha2,3 sialylated lactosamine unit of a glycoprotein- or a glycolipid-linked sialopolylactosamines chain or of a distal or internal lactosamine unit of a neutral glycoprotein- or a glycolipid-linked polylactosamines chain through an alpha-1,3 glycosidic linkage and participates in surface expression of the sialyl Lewis X (sLe(x)), Lewis X (Le(x)) and non sialylated VIM2 determinants. Moreover transfers fucose to H-type 2 (Fucalpha1-2Galbeta1-4GlcNAc) chain acceptor substrates and participates in difucosylated sialyl Lewis x determinants. Also fucosylates a polylactosamine substrate having a 6 sulfate modification at the GlcNAc moiety and gives rise to sialyl and non-sialyl 6-sulfo lewis X. Does not have activity towards type 1 ((Galbeta1-3GlcNAc)) and H-type 1 chain (Fucalpha1-2Galbeta1-3GlcNAc) acceptors substrates. Does not have alpha(1,3)-fucosyltransferase activity. In Homo sapiens (Human), this protein is 4-galactosyl-N-acetylglucosaminide 3-alpha-L-fucosyltransferase FUT6.